The chain runs to 66 residues: Large ribosomal subunit protein uL29 (66 aa).

Belongs to the universal ribosomal protein uL29 family.

This Francisella philomiragia subsp. philomiragia (strain ATCC 25017 / CCUG 19701 / FSC 153 / O#319-036) protein is Large ribosomal subunit protein uL29.